The primary structure comprises 144 residues: Transcriptional regulator MraZ (144 aa).

SpoVT-AbrB domains follow at residues 5 to 47 (EYQY…PLDR) and 76 to 121 (AHKT…SQER).

Belongs to the MraZ family. As to quaternary structure, forms oligomers.

The protein resides in the cytoplasm. The protein localises to the nucleoid. The sequence is that of Transcriptional regulator MraZ from Thermus thermophilus (strain ATCC BAA-163 / DSM 7039 / HB27).